A 239-amino-acid chain; its full sequence is Ribonuclease HII (239 aa).

Positions 18-231 constitute an RNase H type-2 domain; that stretch reads KIIVGLDEAG…SKNLLKEIEE (214 aa). Positions 24, 25, and 125 each coordinate a divalent metal cation.

Belongs to the RNase HII family. The cofactor is Mn(2+). Mg(2+) is required as a cofactor.

It is found in the cytoplasm. The catalysed reaction is Endonucleolytic cleavage to 5'-phosphomonoester.. Endonuclease that specifically degrades the RNA of RNA-DNA hybrids. This is Ribonuclease HII from Methanococcus maripaludis (strain C7 / ATCC BAA-1331).